The primary structure comprises 69 residues: DNA gyrase inhibitor YacG (69 aa).

Residues 1 to 28 (MSGEGKKHGSNVEPLRPTRPCPECGRPS) are disordered. 4 residues coordinate Zn(2+): C21, C24, C36, and C40.

This sequence belongs to the DNA gyrase inhibitor YacG family. Interacts with GyrB. Zn(2+) serves as cofactor.

In terms of biological role, inhibits all the catalytic activities of DNA gyrase by preventing its interaction with DNA. Acts by binding directly to the C-terminal domain of GyrB, which probably disrupts DNA binding by the gyrase. The sequence is that of DNA gyrase inhibitor YacG from Sinorhizobium fredii (strain NBRC 101917 / NGR234).